A 232-amino-acid polypeptide reads, in one-letter code: Thiamine import ATP-binding protein ThiQ (232 aa).

One can recognise an ABC transporter domain in the interval 2 to 230 (LKLTDITWLY…KASASALLGI (229 aa)). 32-39 (GPSGAGKS) is a binding site for ATP.

Belongs to the ABC transporter superfamily. Thiamine importer (TC 3.A.1.19.1) family. As to quaternary structure, the complex is composed of two ATP-binding proteins (ThiQ), two transmembrane proteins (ThiP) and a solute-binding protein (ThiB).

It localises to the cell inner membrane. The catalysed reaction is thiamine(out) + ATP + H2O = thiamine(in) + ADP + phosphate + H(+). Part of the ABC transporter complex ThiBPQ involved in thiamine import. Responsible for energy coupling to the transport system. This chain is Thiamine import ATP-binding protein ThiQ, found in Escherichia coli (strain K12).